The sequence spans 248 residues: Pyridoxine 5'-phosphate synthase (248 aa).

Position 12 (asparagine 12) interacts with 3-amino-2-oxopropyl phosphate. Residue 14–15 participates in 1-deoxy-D-xylulose 5-phosphate binding; that stretch reads DH. Arginine 23 is a binding site for 3-amino-2-oxopropyl phosphate. Histidine 48 serves as the catalytic Proton acceptor. 1-deoxy-D-xylulose 5-phosphate-binding residues include arginine 50 and histidine 55. Glutamate 75 functions as the Proton acceptor in the catalytic mechanism. Threonine 105 contacts 1-deoxy-D-xylulose 5-phosphate. Histidine 196 serves as the catalytic Proton donor. 3-amino-2-oxopropyl phosphate-binding positions include glycine 197 and 218–219; that span reads GH.

The protein belongs to the PNP synthase family. In terms of assembly, homooctamer; tetramer of dimers.

The protein resides in the cytoplasm. The catalysed reaction is 3-amino-2-oxopropyl phosphate + 1-deoxy-D-xylulose 5-phosphate = pyridoxine 5'-phosphate + phosphate + 2 H2O + H(+). The protein operates within cofactor biosynthesis; pyridoxine 5'-phosphate biosynthesis; pyridoxine 5'-phosphate from D-erythrose 4-phosphate: step 5/5. Catalyzes the complicated ring closure reaction between the two acyclic compounds 1-deoxy-D-xylulose-5-phosphate (DXP) and 3-amino-2-oxopropyl phosphate (1-amino-acetone-3-phosphate or AAP) to form pyridoxine 5'-phosphate (PNP) and inorganic phosphate. The protein is Pyridoxine 5'-phosphate synthase of Azotobacter vinelandii (strain DJ / ATCC BAA-1303).